The primary structure comprises 41 residues: Large ribosomal subunit protein bL36 (41 aa).

It belongs to the bacterial ribosomal protein bL36 family.

This is Large ribosomal subunit protein bL36 from Granulibacter bethesdensis (strain ATCC BAA-1260 / CGDNIH1).